The following is a 269-amino-acid chain: Integral membrane protein 2C (269 aa).

At Thr-39 the chain carries Phosphothreonine. The chain crosses the membrane as a helical; Signal-anchor for type II membrane protein span at residues 57–77 (VGGVCYLSMGMVVLLMGLVFA). The region spanning 138–232 (FGGGDPADII…LCNGKDTYRL (95 aa)) is the BRICHOS domain. A disulfide bridge links Cys-165 with Cys-224. A glycan (N-linked (GlcNAc...) asparagine) is linked at Asn-171.

This sequence belongs to the ITM2 family. In terms of assembly, interacts with BACE1. Interacts with APP. Interacts with STMN2. In terms of processing, type I membrane-bound, as well as soluble, furin has a pre-eminent role in ITM2C proteolytic processing. PCSK7 and PCSK5 may also be involved although to a lesser extent. The soluble form of PCSK7 is incapable of processing ITM2C. Fails to undergo shedding by ADAM10 and intramembrane cleavage by SPPL2B.

The protein localises to the lysosome membrane. It localises to the cell membrane. Functionally, negative regulator of amyloid-beta peptide production. May inhibit the processing of APP by blocking its access to alpha- and beta-secretase. Binding to the beta-secretase-cleaved APP C-terminal fragment is negligible, suggesting that ITM2C is a poor gamma-secretase cleavage inhibitor. May play a role in TNF-induced cell death and neuronal differentiation. The chain is Integral membrane protein 2C (Itm2c) from Mus musculus (Mouse).